We begin with the raw amino-acid sequence, 222 residues long: Nudix hydrolase 11 (222 aa).

The region spanning 31–175 is the Nudix hydrolase domain; it reads AKSSAVLVCL…EGERYLLQYF (145 aa). The short motif at 73 to 96 is the Nudix box element; it reads GGKRDQEDKDDIATALREAREEIG. Residues E90 and E94 each contribute to the Mg(2+) site. Residues 186–204 traverse the membrane as a helical segment; that stretch reads FIIWALTAGILIRVASIVY.

This sequence belongs to the Nudix hydrolase family. PCD1 subfamily. The cofactor is Mn(2+). Requires Mg(2+) as cofactor. In terms of tissue distribution, expressed in roots, stems and leaves.

The protein localises to the peroxisome membrane. Its function is as follows. Coenzyme A diphosphatase which mediates the cleavage of CoA into 3',5'-ADP from CoA and 4'-phosphopantetheine. Can use malonyl-CoA, hexanoyl-CoA, lauroyl-CoA, myristoyl-CoA and palmitoyl-CoA as substrates, but not isobutyryl-CoA or propionyl-CoA. This chain is Nudix hydrolase 11 (NUDT11), found in Arabidopsis thaliana (Mouse-ear cress).